The primary structure comprises 259 residues: Insulin-like growth factor-binding protein 1 (259 aa).

Residues 1–25 (MSEVPVARVWLVLLLLTVQVGVTAG) form the signal peptide. Residues 26–107 (APWQCAPCSA…TRGQGACVQE (82 aa)) enclose the IGFBP N-terminal domain. 6 disulfide bridges follow: Cys30–Cys57, Cys33–Cys59, Cys41–Cys60, Cys48–Cys63, Cys71–Cys84, and Cys78–Cys104. Ser45 bears the Phosphoserine; by FAM20C mark. Phosphoserine occurs at positions 120, 123, 126, and 144. The residue at position 156 (Ser156) is a Phosphoserine; by FAM20C. Thr157 carries the post-translational modification Phosphothreonine; by FAM20C. Phosphotyrosine is present on Tyr158. A Thyroglobulin type-1 domain is found at 173-251 (KEPCRIELYR…SPEIRGDPNC (79 aa)). Cystine bridges form between Cys176–Cys206, Cys217–Cys228, and Cys230–Cys251. Thr193 bears the Phosphothreonine; by FAM20C mark. Residues Ser194 and Ser199 each carry the phosphoserine; by FAM20C modification. Ser242 carries the phosphoserine; by FAM20C modification. The Cell attachment site motif lies at 246–248 (RGD).

Binds equally well IGF1 and IGF2. Interacts with integrin ITGA5:ITGB1. Interacts with VHL; this interaction inhibits HIF1A degradation. Post-translationally, phosphorylated; probably by casein kinase II. Phosphorylation alters the affinity of the protein for IGFs. In amniotic fluid, the unmodified protein is the most abundant form, while mono-, bi-, tri- and tetraphosphorylated forms are present in decreasing amounts. The phosphorylation state may influence the propensity to proteolysis.

It localises to the secreted. In terms of biological role, multifunctional protein that plays a critical role in regulating the availability of IGFs such as IGF1 and IGF2 to their receptors and thereby regulates IGF-mediated cellular processes including cell migration, proliferation, differentiation or apoptosis in a cell-type specific manner. Also plays a positive role in cell migration by interacting with integrin ITGA5:ITGB1 through its RGD motif. Mechanistically, binding to integrins leads to activation of focal adhesion kinase/PTK2 and stimulation of the mitogen-activated protein kinase (MAPK) pathway. Regulates cardiomyocyte apoptosis by suppressing HIF-1alpha/HIF1A ubiquitination and subsequent degradation. The sequence is that of Insulin-like growth factor-binding protein 1 (IGFBP1) from Homo sapiens (Human).